The chain runs to 265 residues: Hydroxyethylthiazole kinase (265 aa).

Met-50 serves as a coordination point for substrate. ATP is bound by residues Arg-125 and Thr-171. Gly-198 is a substrate binding site.

This sequence belongs to the Thz kinase family. Requires Mg(2+) as cofactor.

The catalysed reaction is 5-(2-hydroxyethyl)-4-methylthiazole + ATP = 4-methyl-5-(2-phosphooxyethyl)-thiazole + ADP + H(+). It functions in the pathway cofactor biosynthesis; thiamine diphosphate biosynthesis; 4-methyl-5-(2-phosphoethyl)-thiazole from 5-(2-hydroxyethyl)-4-methylthiazole: step 1/1. Functionally, catalyzes the phosphorylation of the hydroxyl group of 4-methyl-5-beta-hydroxyethylthiazole (THZ). This chain is Hydroxyethylthiazole kinase, found in Salmonella newport (strain SL254).